A 216-amino-acid polypeptide reads, in one-letter code: Hexitol phosphatase A (216 aa).

Asp9 acts as the Nucleophile in catalysis. A divalent metal cation-binding residues include Asp9 and Asp11. Residues 9-11, 106-107, and Lys138 each bind substrate; these read DLD and TS. The Proton donor role is filled by Asp11. Position 163 (Asp163) interacts with a divalent metal cation.

It belongs to the HAD-like hydrolase superfamily. CbbY/CbbZ/Gph/YieH family. The cofactor is Mg(2+). It depends on Mn(2+) as a cofactor. Co(2+) is required as a cofactor.

The enzyme catalyses sugar phosphate + H2O = sugar + phosphate.. The catalysed reaction is D-mannitol 1-phosphate + H2O = D-mannitol + phosphate. It carries out the reaction D-sorbitol 6-phosphate + H2O = D-sorbitol + phosphate. Sugar-phosphate phosphohydrolase that appears to contribute to butanol tolerance. Catalyzes the dephosphorylation of D-mannitol 1-phosphate and D-sorbitol 6-phosphate. Is also able to dephosphorylate other sugar phosphates in vitro including ribose-5-phosphate (Rib5P), 2-deoxyribose-5-phosphate, fructose-1-phosphate (Fru1P), fructose-6-phosphate (Fru6P), and glucose-6-phosphate (Glu6P). Selectively hydrolyzes beta-D-glucose-1-phosphate (bGlu1P) and has no activity with the alpha form. This chain is Hexitol phosphatase A, found in Escherichia coli (strain K12).